Here is a 294-residue protein sequence, read N- to C-terminus: Glyceraldehyde-3-phosphate dehydrogenase (294 aa).

Residues Asp-19, Lys-63, and Thr-105 each contribute to the NAD(+) site. Residues 134-136 (SCT), Thr-165, 194-195 (TG), and Arg-217 contribute to the D-glyceraldehyde 3-phosphate site. Cys-135 functions as the Nucleophile in the catalytic mechanism.

Belongs to the glyceraldehyde-3-phosphate dehydrogenase family. In terms of assembly, homotetramer.

It is found in the cytoplasm. It carries out the reaction D-glyceraldehyde 3-phosphate + phosphate + NAD(+) = (2R)-3-phospho-glyceroyl phosphate + NADH + H(+). It functions in the pathway carbohydrate degradation; glycolysis; pyruvate from D-glyceraldehyde 3-phosphate: step 1/5. In terms of biological role, catalyzes the oxidative phosphorylation of glyceraldehyde 3-phosphate (G3P) to 1,3-bisphosphoglycerate (BPG) using the cofactor NAD. The first reaction step involves the formation of a hemiacetal intermediate between G3P and a cysteine residue, and this hemiacetal intermediate is then oxidized to a thioester, with concomitant reduction of NAD to NADH. The reduced NADH is then exchanged with the second NAD, and the thioester is attacked by a nucleophilic inorganic phosphate to produce BPG. The polypeptide is Glyceraldehyde-3-phosphate dehydrogenase (gap) (Atlantibacter hermannii (Escherichia hermannii)).